The following is a 263-amino-acid chain: Endonuclease 8 (263 aa).

The Schiff-base intermediate with DNA role is filled by P2. Catalysis depends on E3, which acts as the Proton donor. The active-site Proton donor; for beta-elimination activity is K53. DNA-binding residues include Q70, R125, and N169. The segment at 229-263 adopts an FPG-type zinc-finger fold; sequence KVFHRDGEPCERCGGIIEKTTLSSRPFYWCPGCQH. R253 serves as the catalytic Proton donor; for delta-elimination activity.

It belongs to the FPG family. Zn(2+) serves as cofactor.

The enzyme catalyses 2'-deoxyribonucleotide-(2'-deoxyribose 5'-phosphate)-2'-deoxyribonucleotide-DNA = a 3'-end 2'-deoxyribonucleotide-(2,3-dehydro-2,3-deoxyribose 5'-phosphate)-DNA + a 5'-end 5'-phospho-2'-deoxyribonucleoside-DNA + H(+). Its function is as follows. Involved in base excision repair of DNA damaged by oxidation or by mutagenic agents. Acts as a DNA glycosylase that recognizes and removes damaged bases. Has a preference for oxidized pyrimidines, such as thymine glycol, 5,6-dihydrouracil and 5,6-dihydrothymine. Has AP (apurinic/apyrimidinic) lyase activity and introduces nicks in the DNA strand. Cleaves the DNA backbone by beta-delta elimination to generate a single-strand break at the site of the removed base with both 3'- and 5'-phosphates. The chain is Endonuclease 8 from Escherichia coli O6:K15:H31 (strain 536 / UPEC).